Here is a 942-residue protein sequence, read N- to C-terminus: DNA polymerase I (942 aa).

The 5'-3' exonuclease domain maps to 177–269 (EPDQLADLRG…LEAARIGVYD (93 aa)). Residues 340–522 (TIVRDATALA…LTERLQRQLE (183 aa)) form the 3'-5' exonuclease domain.

Belongs to the DNA polymerase type-A family. In terms of assembly, single-chain monomer with multiple functions.

It carries out the reaction DNA(n) + a 2'-deoxyribonucleoside 5'-triphosphate = DNA(n+1) + diphosphate. In terms of biological role, in addition to polymerase activity, this DNA polymerase exhibits 3'-5' and 5'-3' exonuclease activity. This Chloroflexus aurantiacus (strain ATCC 29366 / DSM 635 / J-10-fl) protein is DNA polymerase I (polA).